A 715-amino-acid chain; its full sequence is Coiled-coil domain-containing protein 13 (715 aa).

2 coiled-coil regions span residues 16–105 (KAMQ…KERD) and 134–458 (ATKI…NVHY). The disordered stretch occupies residues 20 to 65 (EMQHKRLQKQMEKKREKELSLKSRADDQEEPLEVSDGLSLLHAGEP). Over residues 28–45 (KQMEKKREKELSLKSRAD) the composition is skewed to basic and acidic residues. Phosphoserine occurs at positions 258, 469, and 536. Disordered regions lie at residues 482–541 (EDPG…EQKG) and 607–645 (LEPG…DPSF). The stretch at 554-608 (QAAEVERDRLTEFVTVLQKRVEESNSKLLESERKLQEERHRTVVLEQHLEKIRLE) forms a coiled coil. A compositionally biased stretch (polar residues) spans 625 to 637 (GLPTSNNRHNPTG). Residues 653-683 (VESQMEELTTRLAIQVEENEMLKAALGSALR) are a coiled coil.

As to quaternary structure, interacts with PCM1, CEP290 and PCNT.

It is found in the cytoplasm. Its subcellular location is the cytoskeleton. The protein localises to the microtubule organizing center. The protein resides in the centrosome. It localises to the centriolar satellite. It is found in the cilium basal body. Required for primary cilia formation and promotes the localization of the ciliopathy protein BBS4 to both centriolar satellites and cilia. The polypeptide is Coiled-coil domain-containing protein 13 (Homo sapiens (Human)).